Reading from the N-terminus, the 1425-residue chain is Death-associated protein kinase dapk-1 (1425 aa).

Residues 28–289 (YEIETELGSG…VEECLQHPWI (262 aa)) enclose the Protein kinase domain. ATP contacts are provided by residues 34–42 (LGSGQFAVV) and Lys-57. Asp-155 (proton acceptor) is an active-site residue. ANK repeat units lie at residues 392–421 (NGATAMHCAAKYGHAEVFNYFHMKGGNICA), 425–454 (NGDTPLHVACRFAQHTVAGYVANEKIDVDS), 458–487 (TGETALHCAVESADTRVVRLLLQLRPRLDL), 491–520 (SGDTVLHLAADSINPRIVPLLVCLAPPLHL), 524–553 (REETPLHVAAARGHVDCVQALLDANSPIDA), 557–586 (DGKTALIIALENGNVDIASILITNGCDINH), 590–619 (HGDTALHIASKHGLLQAVQTLCHCAVTVDS), 623–652 (NKKTALHLAAHYGHVDIIRVLLLARADVTL), 810–841 (GGYEPMHTCYDHFVGNADCIHLILYRTSDPTE), and 934–963 (IGMKTLKMELAKCRTNILAKLLKPLAILDT). One can recognise a Roc domain in the interval 695–950 (LDTSLRRIKL…MELAKCRTNI (256 aa)). Residues 1308 to 1389 (ELACLLDPPH…DARDALYRTV (82 aa)) enclose the Death domain.

The protein belongs to the protein kinase superfamily. CAMK Ser/Thr protein kinase family. DAP kinase subfamily. As to quaternary structure, interacts with ptrn-1. It depends on Mg(2+) as a cofactor. In terms of tissue distribution, expressed in epidermis, muscles and neurons.

It localises to the cytoplasm. It is found in the cytosol. Its subcellular location is the cytoskeleton. It carries out the reaction L-seryl-[protein] + ATP = O-phospho-L-seryl-[protein] + ADP + H(+). The catalysed reaction is L-threonyl-[protein] + ATP = O-phospho-L-threonyl-[protein] + ADP + H(+). Functionally, negative regulator of epidermal barrier repair and innate immune responses to wounding. The role in epidermal tissue integrity and wound healing is established through the inhibition of epidermal microtubule stability, possibly via the negative regulation of the microtubule minus-end binding protein ptrn-1. In epidermis, prevents expression of specific unc-44 isoforms probably by promoting nuclear localization of pinn-1, which in turn may affect sydn-1-ssup-72-mediated regulation of alternative polyadenylation of unc-44 mRNA. Appears to act downstream of or in parallel to muscarinic signaling in the regulation of autophagy. In Caenorhabditis elegans, this protein is Death-associated protein kinase dapk-1.